The following is a 332-amino-acid chain: Ribosomal RNA-processing protein 8 (332 aa).

Residues 1 to 109 are disordered; sequence MGKKRINEVS…EVEKKNEEGD (109 aa). Composition is skewed to basic residues over residues 38–53 and 82–94; these read KKKK…KLAA and KKKK…KKKY. Positions 95 to 109 are enriched in basic and acidic residues; sequence KPEAAEVEKKNEEGD. Histidine 158, glycine 193, aspartate 213, aspartate 225, methionine 226, and cysteine 242 together coordinate S-adenosyl-L-methionine.

It belongs to the methyltransferase superfamily. RRP8 family.

The protein resides in the nucleus. It localises to the nucleolus. In terms of biological role, probable methyltransferase required to silence rDNA. In Caenorhabditis briggsae, this protein is Ribosomal RNA-processing protein 8 (rrp-8).